Consider the following 64-residue polypeptide: Cytochrome c oxidase subunit 2 (64 aa).

The Mitochondrial intermembrane portion of the chain corresponds to Met-1–Ser-14. A helical membrane pass occupies residues Pro-15 to Met-45. At Leu-46–Ile-64 the chain is on the mitochondrial matrix side.

The protein belongs to the cytochrome c oxidase subunit 2 family. Component of the cytochrome c oxidase (complex IV, CIV), a multisubunit enzyme composed of 14 subunits. The complex is composed of a catalytic core of 3 subunits MT-CO1, MT-CO2 and MT-CO3, encoded in the mitochondrial DNA, and 11 supernumerary subunits COX4I, COX5A, COX5B, COX6A, COX6B, COX6C, COX7A, COX7B, COX7C, COX8 and NDUFA4, which are encoded in the nuclear genome. The complex exists as a monomer or a dimer and forms supercomplexes (SCs) in the inner mitochondrial membrane with NADH-ubiquinone oxidoreductase (complex I, CI) and ubiquinol-cytochrome c oxidoreductase (cytochrome b-c1 complex, complex III, CIII), resulting in different assemblies (supercomplex SCI(1)III(2)IV(1) and megacomplex MCI(2)III(2)IV(2)). Found in a complex with TMEM177, COA6, COX18, COX20, SCO1 and SCO2. Interacts with TMEM177 in a COX20-dependent manner. Interacts with COX20. Interacts with COX16. The cofactor is Cu cation.

It localises to the mitochondrion inner membrane. The catalysed reaction is 4 Fe(II)-[cytochrome c] + O2 + 8 H(+)(in) = 4 Fe(III)-[cytochrome c] + 2 H2O + 4 H(+)(out). Functionally, component of the cytochrome c oxidase, the last enzyme in the mitochondrial electron transport chain which drives oxidative phosphorylation. The respiratory chain contains 3 multisubunit complexes succinate dehydrogenase (complex II, CII), ubiquinol-cytochrome c oxidoreductase (cytochrome b-c1 complex, complex III, CIII) and cytochrome c oxidase (complex IV, CIV), that cooperate to transfer electrons derived from NADH and succinate to molecular oxygen, creating an electrochemical gradient over the inner membrane that drives transmembrane transport and the ATP synthase. Cytochrome c oxidase is the component of the respiratory chain that catalyzes the reduction of oxygen to water. Electrons originating from reduced cytochrome c in the intermembrane space (IMS) are transferred via the dinuclear copper A center (CU(A)) of subunit 2 and heme A of subunit 1 to the active site in subunit 1, a binuclear center (BNC) formed by heme A3 and copper B (CU(B)). The BNC reduces molecular oxygen to 2 water molecules using 4 electrons from cytochrome c in the IMS and 4 protons from the mitochondrial matrix. The protein is Cytochrome c oxidase subunit 2 (mt-co2) of Geophagus steindachneri (Red hump earth eater).